The chain runs to 408 residues: Arginine biosynthesis bifunctional protein ArgJ (408 aa).

Substrate is bound by residues T156, K182, T193, E279, N403, and S408. T193 serves as the catalytic Nucleophile.

The protein belongs to the ArgJ family. As to quaternary structure, heterotetramer of two alpha and two beta chains.

Its subcellular location is the cytoplasm. It catalyses the reaction N(2)-acetyl-L-ornithine + L-glutamate = N-acetyl-L-glutamate + L-ornithine. The catalysed reaction is L-glutamate + acetyl-CoA = N-acetyl-L-glutamate + CoA + H(+). It participates in amino-acid biosynthesis; L-arginine biosynthesis; L-ornithine and N-acetyl-L-glutamate from L-glutamate and N(2)-acetyl-L-ornithine (cyclic): step 1/1. Its pathway is amino-acid biosynthesis; L-arginine biosynthesis; N(2)-acetyl-L-ornithine from L-glutamate: step 1/4. Functionally, catalyzes two activities which are involved in the cyclic version of arginine biosynthesis: the synthesis of N-acetylglutamate from glutamate and acetyl-CoA as the acetyl donor, and of ornithine by transacetylation between N(2)-acetylornithine and glutamate. In Dechloromonas aromatica (strain RCB), this protein is Arginine biosynthesis bifunctional protein ArgJ.